The chain runs to 216 residues: Elongation factor Ts (216 aa).

Positions 81-84 (TDFV) are involved in Mg(2+) ion dislocation from EF-Tu.

It belongs to the EF-Ts family.

Its subcellular location is the cytoplasm. Functionally, associates with the EF-Tu.GDP complex and induces the exchange of GDP to GTP. It remains bound to the aminoacyl-tRNA.EF-Tu.GTP complex up to the GTP hydrolysis stage on the ribosome. The polypeptide is Elongation factor Ts (Geobacter sulfurreducens (strain ATCC 51573 / DSM 12127 / PCA)).